The chain runs to 539 residues: Chaperonin GroEL (539 aa).

ATP contacts are provided by residues 29 to 32 (TIGP), 86 to 90 (DGTTT), Gly413, 476 to 478 (NAA), and Asp492.

The protein belongs to the chaperonin (HSP60) family. In terms of assembly, forms a cylinder of 14 subunits composed of two heptameric rings stacked back-to-back. Interacts with the co-chaperonin GroES.

It localises to the cytoplasm. The catalysed reaction is ATP + H2O + a folded polypeptide = ADP + phosphate + an unfolded polypeptide.. Together with its co-chaperonin GroES, plays an essential role in assisting protein folding. The GroEL-GroES system forms a nano-cage that allows encapsulation of the non-native substrate proteins and provides a physical environment optimized to promote and accelerate protein folding. The protein is Chaperonin GroEL of Staphylococcus epidermidis (strain ATCC 12228 / FDA PCI 1200).